Consider the following 139-residue polypeptide: Acidic phospholipase A2 BpPLA2-TXI (139 aa).

The N-terminal stretch at 1–16 is a signal peptide; it reads MRTLWIMAVLLVGVEG. An intrachain disulfide couples Cys-44 to Cys-60. Positions 45 and 47 each coordinate Ca(2+). His-63 is a catalytic residue. Asp-64 is a Ca(2+) binding site. Intrachain disulfides connect Cys-65/Cys-139, Cys-73/Cys-97, and Cys-91/Cys-102.

The protein belongs to the phospholipase A2 family. Group II subfamily. D49 sub-subfamily. Ca(2+) serves as cofactor. As to expression, expressed by the venom gland.

It is found in the secreted. The catalysed reaction is a 1,2-diacyl-sn-glycero-3-phosphocholine + H2O = a 1-acyl-sn-glycero-3-phosphocholine + a fatty acid + H(+). In terms of biological role, PLA2 catalyzes the calcium-dependent hydrolysis of the 2-acyl groups in 3-sn-phosphoglycerides. This chain is Acidic phospholipase A2 BpPLA2-TXI, found in Bothrops pauloensis (Neuwied's lancehead).